The primary structure comprises 396 residues: Elongation factor Tu (396 aa).

One can recognise a tr-type G domain in the interval 10 to 206 (KPHVNVGTIG…TMDSYIPEPV (197 aa)). A G1 region spans residues 19-26 (GHVDHGKT). 19 to 26 (GHVDHGKT) provides a ligand contact to GTP. Residue T26 participates in Mg(2+) binding. A G2 region spans residues 60–64 (GITIS). The interval 81 to 84 (DCPG) is G3. Residues 81–85 (DCPGH) and 136–139 (NKAD) each bind GTP. Residues 136–139 (NKAD) are G4. The interval 174–176 (SAL) is G5.

This sequence belongs to the TRAFAC class translation factor GTPase superfamily. Classic translation factor GTPase family. EF-Tu/EF-1A subfamily. Monomer.

It localises to the cytoplasm. The enzyme catalyses GTP + H2O = GDP + phosphate + H(+). In terms of biological role, GTP hydrolase that promotes the GTP-dependent binding of aminoacyl-tRNA to the A-site of ribosomes during protein biosynthesis. The polypeptide is Elongation factor Tu (Legionella pneumophila (strain Lens)).